A 265-amino-acid polypeptide reads, in one-letter code: Cell division protein DivIB (265 aa).

Topologically, residues 1–30 (MKNSKVIKLQDRVPKLKNQQKKKKKNVNHR) are cytoplasmic. Residues 31–51 (LILYISILFLLVLFLIYFRSP) traverse the membrane as a helical segment. The Extracellular segment spans residues 52–265 (LSNIKKISVF…NRMIVFNTLS (214 aa)). A POTRA domain is found at 53–121 (SNIKKISVFG…NKIDVHIEEY (69 aa)).

The protein belongs to the FtsQ/DivIB family. DivIB subfamily.

The protein resides in the cell membrane. Its function is as follows. Cell division protein that may be involved in stabilizing or promoting the assembly of the division complex. The chain is Cell division protein DivIB from Bacillus anthracis.